The chain runs to 109 residues: Period circadian protein (109 aa).

Residues 29–100 are disordered; it reads ITAPVDVDPH…TGTSSGSVQL (72 aa). Positions 69 to 97 are enriched in low complexity; that stretch reads SGNFNSGSNLHIGSITNTSNTGTGTSSGS.

In terms of assembly, forms a heterodimer with timeless (TIM); the complex then translocates into the nucleus. Post-translationally, phosphorylated with a circadian rhythmicity, probably by the double-time protein (dbt). Phosphorylation could be implicated in the stability of per monomer and in the formation of heterodimer per-tim.

It localises to the nucleus. The protein resides in the cytoplasm. It is found in the perinuclear region. Its function is as follows. Essential for biological clock functions. Determines the period length of circadian and ultradian rhythms; an increase in PER dosage leads to shortened circadian rhythms and a decrease leads to lengthened circadian rhythms. Essential for the circadian rhythmicity of locomotor activity, eclosion behavior, and for the rhythmic component of the male courtship song that originates in the thoracic nervous system. The biological cycle depends on the rhythmic formation and nuclear localization of the TIM-PER complex. Light induces the degradation of TIM, which promotes elimination of PER. Nuclear activity of the heterodimer coordinatively regulates PER and TIM transcription through a negative feedback loop. Behaves as a negative element in circadian transcriptional loop. Does not appear to bind DNA, suggesting indirect transcriptional inhibition. The sequence is that of Period circadian protein (per) from Loxocera albiseta (Rust fly).